Reading from the N-terminus, the 301-residue chain is Glutamyl-Q tRNA(Asp) synthetase (301 aa).

L-glutamate contacts are provided by residues 9–13 (RFAPS) and Glu-45. A 'HIGH' region motif is present at residues 12–22 (PSPTGPLHLGS). Zn(2+) contacts are provided by Cys-101, Cys-103, Tyr-121, and Cys-125. L-glutamate is bound by residues Tyr-179 and Arg-197. A 'KMSKS' region motif is present at residues 235–239 (KLSKQ). Residue Lys-238 participates in ATP binding.

This sequence belongs to the class-I aminoacyl-tRNA synthetase family. GluQ subfamily. Zn(2+) serves as cofactor.

Its function is as follows. Catalyzes the tRNA-independent activation of glutamate in presence of ATP and the subsequent transfer of glutamate onto a tRNA(Asp). Glutamate is transferred on the 2-amino-5-(4,5-dihydroxy-2-cyclopenten-1-yl) moiety of the queuosine in the wobble position of the QUC anticodon. This Thiobacillus denitrificans (strain ATCC 25259 / T1) protein is Glutamyl-Q tRNA(Asp) synthetase.